The following is a 466-amino-acid chain: Xanthine permease XanQ (466 aa).

Over 1 to 44 (MSDINHAGSDLIFELEDRPPFHQALVGAITHLLAIFVPMVTPAL) the chain is Cytoplasmic. The helical transmembrane segment at 45–65 (IVGAALQLSAETTAYLVSMAM) threads the bilayer. Residues 66–74 (IASGIGTWL) lie on the Periplasmic side of the membrane. The helical transmembrane segment at 75 to 95 (QVNRYGIVGSGLLSIQSVNFS) threads the bilayer. Topologically, residues 96–99 (FVTV) are cytoplasmic. A helical membrane pass occupies residues 100-120 (MIALGSSMKSDGFHEELIMSS). Residues 121 to 139 (LLGVSFVGAFLVVGSSFIL) lie on the Periplasmic side of the membrane. The helical transmembrane segment at 140 to 160 (PYLRRVITPTVSGIVVLMIGL) threads the bilayer. Residues 161–170 (SLIKVGIIDF) lie on the Cytoplasmic side of the membrane. Residues 171 to 191 (GGGFAAKSSGTFGNYEHLGVG) form a helical membrane-spanning segment. The Periplasmic portion of the chain corresponds to 192–199 (LLVLIVVI). A helical membrane pass occupies residues 200–220 (GFNCCRSPLLRMGGIAIGLCV). At 221–229 (GYIASLCLG) the chain is on the cytoplasmic side. The chain crosses the membrane as a helical span at residues 230–250 (MVDFSSMRNLPLITIPHPFKY). Residues 251 to 277 (GFSFSFHQFLVVGTIYLLSVLEAVGDI) lie on the Periplasmic side of the membrane. The helical transmembrane segment at 278–298 (TATAMVSRRPIQGEEYQSRLK) threads the bilayer. The Cytoplasmic portion of the chain corresponds to 299–317 (GGVLADGLVSVIASAVGSL). Residues 318–338 (PLTTFAQNNGVIQMTGVASRY) traverse the membrane as a helical segment. Over 339-361 (VGRTIAVMLVILGLFPMIGGFFT) the chain is Periplasmic. A helical transmembrane segment spans residues 362-382 (TIPSAVLGGAMTLMFSMIAIA). A topological domain (cytoplasmic) is located at residue G383. Residues 384-403 (IRIIITNGLKRRETLIVATS) traverse the membrane as a helical segment. Topologically, residues 404–444 (LGLGLGVSYDPEIFKILPASIYVLVENPICAGGLTAILLNI) are periplasmic. Residues 445–465 (ILPGGYRQENVLPGITSAEEM) traverse the membrane as a helical segment. Residue D466 is a topological domain, cytoplasmic.

Belongs to the nucleobase:cation symporter-2 (NCS2) (TC 2.A.40) family.

It is found in the cell inner membrane. It carries out the reaction xanthine(in) + H(+)(in) = xanthine(out) + H(+)(out). Its function is as follows. Specific, proton motive force-dependent high-affinity transporter for xanthine. The protein is Xanthine permease XanQ (xanQ) of Escherichia coli O157:H7.